A 320-amino-acid chain; its full sequence is Formimidoylglutamase (320 aa).

Residues His-125, Asp-153, His-155, Asp-157, Asp-244, and Asp-246 each contribute to the Mn(2+) site.

It belongs to the arginase family. The cofactor is Mn(2+).

The catalysed reaction is N-formimidoyl-L-glutamate + H2O = formamide + L-glutamate. The protein operates within amino-acid degradation; L-histidine degradation into L-glutamate; L-glutamate from N-formimidoyl-L-glutamate (hydrolase route): step 1/1. Catalyzes the conversion of N-formimidoyl-L-glutamate to L-glutamate and formamide. The polypeptide is Formimidoylglutamase (Rhodococcus jostii (strain RHA1)).